The primary structure comprises 206 residues: Max dimerization protein 3 (206 aa).

The tract at residues 8-25 (IQVLLQAAEFLERREREA) is interaction with SIN3A and SIN3B. The 53-residue stretch at 57–109 (SGRHVHNELEKRRRAQLKRCLEQLRQQMPLGVDHTRYTTLSLLRGARMHIQKL) folds into the bHLH domain.

Efficient DNA binding requires dimerization with another bHLH protein. Binds DNA as a heterodimer with MAX. Interacts with SIN3A AND SIN3B. Interacts with RNF17.

Its subcellular location is the nucleus. Functionally, transcriptional repressor. Binds with MAX to form a sequence-specific DNA-binding protein complex which recognizes the core sequence 5'-CAC[GA]TG-3'. Antagonizes MYC transcriptional activity by competing for MAX and suppresses MYC dependent cell transformation. In Rattus norvegicus (Rat), this protein is Max dimerization protein 3 (Mxd3).